Consider the following 627-residue polypeptide: Spindle assembly abnormal protein 6 homolog (627 aa).

The PISA domain maps to 39–91; the sequence is VHRKDLVVRLTDDTDLYFLYNLIISEEDFQSLKVQQGLLIDFTSFPQKFIDLL. Residues 153–473 are a coiled coil; sequence LASCLSSVKE…SREVLKTNEN (321 aa). 2 disordered regions span residues 187-257 and 561-586; these read QTLS…LQTK and EVSP…SKYF. Residues 191–201 are compositionally biased toward basic and acidic residues; it reads EKSRELDKLRS. Polar residues predominate over residues 202 to 213; sequence EWTSQTTSLSSR. Basic and acidic residues predominate over residues 214–226; that stretch reads HMQDLTAEREKAL. The span at 229 to 238 shows a compositional bias: low complexity; the sequence is QSRLQQQNEQ.

In terms of assembly, nine homodimers form a cartwheel structure with an internal diameter of 23 nM and radial spokes connecting to the microtubule triplets.

The protein resides in the cytoplasm. It localises to the cytoskeleton. Its subcellular location is the microtubule organizing center. The protein localises to the centrosome. Central scaffolding component of the centrioles ensuring their 9-fold symmetry. Required for centrosome biogenesis and duplication: required both for mother-centriole-dependent centriole duplication and deuterosome-dependent centriole amplification in multiciliated cells. The polypeptide is Spindle assembly abnormal protein 6 homolog (sass6) (Danio rerio (Zebrafish)).